The chain runs to 145 residues: Antimicrobial peptide NK-lysin (145 aa).

An N-terminal signal peptide occupies residues 1–22 (MTSRALLLLASALLGTPGLTFS). Positions 23–62 (GLNPESYDLATAHLSDGEQFCQGLTQEDLQGDLLTERERQ) are excised as a propeptide. Residues 62–142 (QGIACWSCRK…VDIKLCKHKA (81 aa)) form the Saposin B-type domain. 3 disulfide bridges follow: cysteine 66–cysteine 138, cysteine 69–cysteine 132, and cysteine 97–cysteine 107. The propeptide occupies 141 to 145 (KAGLI).

It is found in the secreted. In terms of biological role, may be an effector molecule of cytotoxic activity. Has antimicrobial activity. This is Antimicrobial peptide NK-lysin (NKL) from Equus caballus (Horse).